The chain runs to 292 residues: MNKKFACIGIVGHPRHPSALATHEMLFHWLVARGYSVMVERQIAQDLGLKDAVTGSLAEIGQKADLAVVVGGDGNMLGAARVLARYDIKVIGVNRGNLGFLTDLDPDNALQQLADVLEGEYIDEQRFLLETIVHKENQQCRISTAINEVVLHPGKVAHMIEFEVYIDDRFAFSQRSDGLIIATPTGSTAYSLSAGGPILTPSLEAIALVPMFPHTLSARPLVINGNSTIRLKFSQIGSDLEISCDSQIALPIQEGEEVLIRRSDFHLNLIHPKDYSYFNTLSTKLGWSKKLF.

The active-site Proton acceptor is the D73. NAD(+) contacts are provided by residues 73-74, 147-148, H158, R175, D177, 188-193, and Q247; these read DG, NE, and TAYSLS.

It belongs to the NAD kinase family. It depends on a divalent metal cation as a cofactor.

It localises to the cytoplasm. It catalyses the reaction NAD(+) + ATP = ADP + NADP(+) + H(+). Functionally, involved in the regulation of the intracellular balance of NAD and NADP, and is a key enzyme in the biosynthesis of NADP. Catalyzes specifically the phosphorylation on 2'-hydroxyl of the adenosine moiety of NAD to yield NADP. This chain is NAD kinase, found in Serratia proteamaculans (strain 568).